The following is a 323-amino-acid chain: UPF0200/UPF0201 protein AF_1395 (323 aa).

The interval 1 to 185 (MVLEMKVIAF…EKIRQILLKL (185 aa)) is UPF0200. 12-19 (GYPLSGKS) contributes to the ATP binding site. The segment at 186–323 (AKNVEIEIRT…GRPVKEIDKL (138 aa)) is UPF0201.

This sequence in the N-terminal section; belongs to the UPF0200 family. In the C-terminal section; belongs to the UPF0201 family.

The polypeptide is UPF0200/UPF0201 protein AF_1395 (Archaeoglobus fulgidus (strain ATCC 49558 / DSM 4304 / JCM 9628 / NBRC 100126 / VC-16)).